The primary structure comprises 152 residues: Transcriptional repressor NrdR (152 aa).

The segment at 3–34 is a zinc-finger region; that stretch reads CPFCGHADTQVVDSRVSEDGASIRRRRRCLEC. The region spanning 49-139 is the ATP-cone domain; the sequence is PQVVKQDGHR…VYRSFQDVAE (91 aa).

It belongs to the NrdR family. The cofactor is Zn(2+).

Its function is as follows. Negatively regulates transcription of bacterial ribonucleotide reductase nrd genes and operons by binding to NrdR-boxes. The chain is Transcriptional repressor NrdR from Laribacter hongkongensis (strain HLHK9).